The following is a 137-amino-acid chain: uncharacterized protein (137 aa).

This is an uncharacterized protein from Bos taurus (Bovine).